Reading from the N-terminus, the 1360-residue chain is DNA-directed RNA polymerase subunit beta (1360 aa).

This sequence belongs to the RNA polymerase beta chain family. In terms of assembly, the RNAP catalytic core consists of 2 alpha, 1 beta, 1 beta' and 1 omega subunit. When a sigma factor is associated with the core the holoenzyme is formed, which can initiate transcription.

It carries out the reaction RNA(n) + a ribonucleoside 5'-triphosphate = RNA(n+1) + diphosphate. Its function is as follows. DNA-dependent RNA polymerase catalyzes the transcription of DNA into RNA using the four ribonucleoside triphosphates as substrates. The chain is DNA-directed RNA polymerase subunit beta from Teredinibacter turnerae (strain ATCC 39867 / T7901).